The chain runs to 292 residues: RWD domain-containing protein 2A (292 aa).

The region spanning 14–134 (LEMEMLFSMF…QWLQDNSASY (121 aa)) is the RWD domain.

The sequence is that of RWD domain-containing protein 2A (RWDD2A) from Homo sapiens (Human).